The chain runs to 561 residues: MDDVRSVLLIAALSNAVKHKSVPAAGAVMGAILGTHPELRSKAGEIKGLLGSVLEEVSSLSAEDREEKLKTIAPDQYASLFEKKEKKKIGLPDLPKAEGGVVMRFAPNPSGPLHLGHARAAFLNDEYIRRYGGKYILRIEDTDPKRVDPDAYDMVREDIAWMGLSIAETIFQSDRFSKYYEVGKELIQKGHAYVCRCDNEKFKDLKMHKTACPCRSQSPEEALDLFDQMLDGAFTEGEVGVRLKTDLSHPDPAMRDYPLFRVLTSTPHQRVDAIVYPLMNLSVAVDDHLLGMTHVIRGKDHIANTKRQEFIFRYMGWETPVYRHYGRMGIEGVVLSTSQMRAGIQSGEYSGWDDVRLGTLRAMARRGIQPQAVRNAVVEIGIGETDIQFSWENLYAKNKEIIDSQADRFFFVPDPVLVPVSGSDPVVAKAMRYPGDESRGYREIPFAGSLYLPKAELESGAAYIRLKDLFNIKVLYEGDIIRGEYAGDDLQEARSKKAPIIQWLPENHANPCTLKTPDGDVSGVCEPEAVTTQDRIVQFERVGFARIDAAGNPAVAYFTHR.

The 'HIGH' region signature appears at 107 to 117; that stretch reads PNPSGPLHLGH.

Belongs to the class-I aminoacyl-tRNA synthetase family. Glutamate--tRNA ligase type 2 subfamily.

The protein resides in the cytoplasm. It carries out the reaction tRNA(Glu) + L-glutamate + ATP = L-glutamyl-tRNA(Glu) + AMP + diphosphate. In terms of biological role, catalyzes the attachment of glutamate to tRNA(Glu) in a two-step reaction: glutamate is first activated by ATP to form Glu-AMP and then transferred to the acceptor end of tRNA(Glu). This chain is Glutamate--tRNA ligase, found in Methanospirillum hungatei JF-1 (strain ATCC 27890 / DSM 864 / NBRC 100397 / JF-1).